We begin with the raw amino-acid sequence, 369 residues long: WAT1-related protein At3g53210 (369 aa).

Transmembrane regions (helical) follow at residues 12–31 (IAMVVFQTGYAGNHVIMRYA), 39–59 (LVFPLYRTIVAFSVLAPSAYF), 72–92 (FLIQFFLLGLVGITLNQGFYI), 103–123 (ASATENVVPAVSFLMAALLGI), 133–153 (GIAKVVGTIVSVAGSLVITLY), 182–202 (WTLGCLCLMGHCLCWSSWIVL), 214–234 (FSFVSYSCFFAVIQFFGISAY), 252–272 (ALLYTGLVGSAMVFAIQIYVV), 278–298 (LFVSAYLPLQTLIAAVLATLA), and 303–323 (FYLGGLIGAILIMSGLYLVVM). 2 consecutive EamA domains span residues 24–150 (NHVI…SLVI) and 194–323 (LCWS…LVVM). Positions 348-369 (GDEEDYHNNKPRSPISQPLISS) are disordered.

It belongs to the drug/metabolite transporter (DMT) superfamily. Plant drug/metabolite exporter (P-DME) (TC 2.A.7.4) family.

It is found in the membrane. This chain is WAT1-related protein At3g53210, found in Arabidopsis thaliana (Mouse-ear cress).